Here is a 76-residue protein sequence, read N- to C-terminus: Conotoxin Ca11b (76 aa).

Positions 1–19 are cleaved as a signal peptide; the sequence is MKLVLAIVVILMLLSLSTG. Residues 20–42 constitute a propeptide that is removed on maturation; that stretch reads AEMSDNHASMSANALRDRLLGPK. 4 cysteine pairs are disulfide-bonded: Cys-46/Cys-60, Cys-53/Cys-65, Cys-59/Cys-69, and Cys-64/Cys-76.

In terms of tissue distribution, expressed by the venom duct.

Its subcellular location is the secreted. This chain is Conotoxin Ca11b, found in Conus caracteristicus (Characteristic cone).